Reading from the N-terminus, the 203-residue chain is Dephospho-CoA kinase (203 aa).

Residues 4–203 (VIGITGGIAT…EEGYIQSESE (200 aa)) form the DPCK domain. 12–17 (ATGKST) contributes to the ATP binding site.

The protein belongs to the CoaE family.

Its subcellular location is the cytoplasm. It catalyses the reaction 3'-dephospho-CoA + ATP = ADP + CoA + H(+). The protein operates within cofactor biosynthesis; coenzyme A biosynthesis; CoA from (R)-pantothenate: step 5/5. Functionally, catalyzes the phosphorylation of the 3'-hydroxyl group of dephosphocoenzyme A to form coenzyme A. The polypeptide is Dephospho-CoA kinase (Staphylococcus epidermidis (strain ATCC 12228 / FDA PCI 1200)).